Consider the following 278-residue polypeptide: Putative glycosyltransferase EpsE (278 aa).

The protein belongs to the glycosyltransferase 2 family.

In terms of biological role, may be involved in the production of the exopolysaccharide (EPS) component of the extracellular matrix during biofilm formation. EPS is responsible for the adhesion of chains of cells into bundles. Required for biofilm maintenance. The chain is Putative glycosyltransferase EpsE (epsE) from Bacillus subtilis (strain 168).